A 180-amino-acid chain; its full sequence is Cytokinin-beta-glucosidase (180 aa).

In terms of tissue distribution, accumulates in young leaves and shoot tips.

In terms of biological role, hydrolyzes cytokinin glucosides thus liberating free cytokinins. The sequence is that of Cytokinin-beta-glucosidase (TROLC) from Nicotiana tabacum (Common tobacco).